Reading from the N-terminus, the 330-residue chain is Protein-lysine N-methyltransferase EEF2KMT (330 aa).

Position 1 is an N-acetylmethionine (M1). S-adenosyl-L-methionine-binding positions include W139, 165–167 (GSG), W228, and A247.

The protein belongs to the class I-like SAM-binding methyltransferase superfamily. EEF2KMT family. As to quaternary structure, interacts with FAM86B2 and FAM86C1P.

The protein resides in the cytoplasm. It catalyses the reaction L-lysyl-[protein] + 3 S-adenosyl-L-methionine = N(6),N(6),N(6)-trimethyl-L-lysyl-[protein] + 3 S-adenosyl-L-homocysteine + 3 H(+). Functionally, catalyzes the trimethylation of eukaryotic elongation factor 2 (EEF2) on 'Lys-525'. The protein is Protein-lysine N-methyltransferase EEF2KMT of Homo sapiens (Human).